The sequence spans 36 residues: Alpha-conotoxin-like Pu1.3 (36 aa).

A propeptide spanning residues 1-21 (SDGRNAGADRKGFGLISQMFK) is cleaved from the precursor. Cystine bridges form between C24-C30 and C25-C36.

It belongs to the conotoxin A superfamily. In terms of tissue distribution, expressed by the venom duct.

Its subcellular location is the secreted. Its function is as follows. Alpha-conotoxins act on postsynaptic membranes, they bind to the nicotinic acetylcholine receptors (nAChR) and thus inhibit them. This is Alpha-conotoxin-like Pu1.3 from Conus pulicarius (Flea-bitten cone).